Consider the following 608-residue polypeptide: X-ray repair cross-complementing protein 6 (608 aa).

Basic and acidic residues predominate over residues 1–11 (MSEWESYYKTE). A disordered region spans residues 1–29 (MSEWESYYKTEGEEEEEEEESPDTGGEYK). Serine 2 is modified (N-acetylserine). Residue serine 2 is modified to Phosphoserine. The residue at position 6 (serine 6) is a Phosphoserine; by PRKDC. The segment covering 12–22 (GEEEEEEEESP) has biased composition (acidic residues). The active-site Schiff-base intermediate with DNA; for 5'-deoxyribose-5-phosphate lyase activity is the lysine 29. An N6-acetyllysine modification is found at lysine 29. The residue at position 49 (serine 49) is a Phosphoserine; by PRKDC. A Ku domain is found at 259-466 (FKLGEDVVLM…IDKMKAIVQK (208 aa)). A DNA-binding region spans residues 275 to 339 (VQKANKPFPV…EETEELKRFD (65 aa)). A Glycyl lysine isopeptide (Lys-Gly) (interchain with G-Cter in SUMO2) cross-link involves residue lysine 315. An N6-acetyllysine mark is found at lysine 329, lysine 336, and lysine 459. The interval 371 to 480 (SLVSGSSTLF…YRSDSFENPV (110 aa)) is interaction with XRCC5. Residues serine 475, serine 518, and serine 548 each carry the phosphoserine modification. A disordered region spans residues 534–557 (PEGKVAKRKQDDEGSTSKKPKVEL). Residues 537–557 (KVAKRKQDDEGSTSKKPKVEL) are compositionally biased toward basic and acidic residues. The segment at 548–607 (STSKKPKVELSEEELKAHFRKGTLGKLTVPTLKDICKAHGLKSGPKKQELLDALIRHLEK) is interaction with DEAF1. Lysine 554 is covalently cross-linked (Glycyl lysine isopeptide (Lys-Gly) (interchain with G-Cter in SUMO2)). A Phosphoserine modification is found at serine 558. The residue at position 568 (lysine 568) is an N6,N6,N6-trimethyllysine. The region spanning 571–605 (LGKLTVPTLKDICKAHGLKSGPKKQELLDALIRHL) is the SAP domain. An interaction with BAX region spans residues 576–581 (VPTLKD).

It belongs to the ku70 family. In terms of assembly, heterodimer composed of XRCC5/Ku80 and XRCC6/Ku70. Component of the core long-range non-homologous end joining (NHEJ) complex (also named DNA-PK complex) composed of PRKDC, LIG4, XRCC4, XRCC6/Ku70, XRCC5/Ku86 and NHEJ1/XLF. Additional component of the NHEJ complex includes PAXX. Following autophosphorylation, PRKDC dissociates from DNA, leading to formation of the short-range NHEJ complex, composed of LIG4, XRCC4, XRCC6/Ku70, XRCC5/Ku86 and NHEJ1/XLF. The XRCC5-XRCC6 dimer also associates with NAA15, and this complex binds to the osteocalcin promoter and activates osteocalcin expression. In addition, XRCC6 interacts with the osteoblast-specific transcription factors MSX2, RUNX2 and DLX5. Interacts with ELF3. Interacts with ATP23. The XRCC5-XRRC6 dimer associates in a DNA-dependent manner with APEX1. Binds to CDK9. Identified in a complex with DEAF1 and XRCC5. Interacts with DEAF1 (via the SAND domain); the interaction is direct and may be inhibited by DNA-binding. Interacts with CLU. Interacts with NR4A3; the DNA-dependent protein kinase complex DNA-PK phosphorylates and activates NR4A3 and prevents NR4A3 ubiquitinylation and degradation. Interacts with CYREN (via KBM motif). Interacts (via N-terminus) with HSF1 (via N-terminus); this interaction is direct and prevents XRCC5/XRCC6 heterodimeric binding and non-homologous end joining (NHEJ) repair activities induced by ionizing radiation (IR). Part of the HDP-RNP complex composed of at least HEXIM1, PRKDC, XRCC5, XRCC6, paraspeckle proteins (SFPQ, NONO, PSPC1, RBM14, and MATR3) and NEAT1 RNA. Interacts with HMBOX1. Interacts with ATF7. Interacts with APLF (via KBM motif). Interacts with WRN (via KBM motif). The XRCC5-XRCC6 dimer associates with ALKBH2. Interacts with TPRN; TPRN interacts with a number of DNA damage response proteins, is recruited to sites of DNA damage and may play a role in DNA damage repair. When not acetylated, interacts with BAX. Interacts with ERCC6L2. Post-translationally, phosphorylation by PRKDC may enhance helicase activity. Phosphorylation of Ser-49 does not affect DNA repair. In terms of processing, ADP-ribosylated by PARP3. Methylation by SETD4 leads to accumulation in the cytoplasm and is a prerequisite for acetylation, possibly due to the change of subcellular from the nucleus to the cytosol initiated by methylation, acetylation occurring in the cytosol. Post-translationally, acetylation can be catalyzed in vitro by CREBBP/CBP and KAT2B/PCAF.

Its subcellular location is the nucleus. It is found in the chromosome. The protein localises to the cytoplasm. Single-stranded DNA-dependent ATP-dependent helicase that plays a key role in DNA non-homologous end joining (NHEJ) by recruiting DNA-PK to DNA. Required for double-strand break repair and V(D)J recombination. Also has a role in chromosome translocation. Has a role in chromosome translocation. The DNA helicase II complex binds preferentially to fork-like ends of double-stranded DNA in a cell cycle-dependent manner. It works in the 3'-5' direction. During NHEJ, the XRCC5-XRRC6 dimer performs the recognition step: it recognizes and binds to the broken ends of the DNA and protects them from further resection. Binding to DNA may be mediated by XRCC6. The XRCC5-XRRC6 dimer acts as a regulatory subunit of the DNA-dependent protein kinase complex DNA-PK by increasing the affinity of the catalytic subunit PRKDC to DNA by 100-fold. The XRCC5-XRRC6 dimer is probably involved in stabilizing broken DNA ends and bringing them together. The assembly of the DNA-PK complex to DNA ends is required for the NHEJ ligation step. Probably also acts as a 5'-deoxyribose-5-phosphate lyase (5'-dRP lyase), by catalyzing the beta-elimination of the 5' deoxyribose-5-phosphate at an abasic site near double-strand breaks. 5'-dRP lyase activity allows to 'clean' the termini of abasic sites, a class of nucleotide damage commonly associated with strand breaks, before such broken ends can be joined. The XRCC5-XRRC6 dimer together with APEX1 acts as a negative regulator of transcription. In association with NAA15, the XRCC5-XRRC6 dimer binds to the osteocalcin promoter and activates osteocalcin expression. Plays a role in the regulation of DNA virus-mediated innate immune response by assembling into the HDP-RNP complex, a complex that serves as a platform for IRF3 phosphorylation and subsequent innate immune response activation through the cGAS-STING pathway. Negatively regulates apoptosis by interacting with BAX and sequestering it from the mitochondria. Might have deubiquitination activity, acting on BAX. In Mus musculus (Mouse), this protein is X-ray repair cross-complementing protein 6 (Xrcc6).